A 374-amino-acid polypeptide reads, in one-letter code: Lipopolysaccharide glucosyltransferase WaaG (374 aa).

Positions 15 and 19 each coordinate UDP-alpha-D-glucose. The segment at 103 to 132 is membrane-interacting region; the sequence is YAEKVAQEKGFLYRLTSRYRHYAAFERATF. Residues Arg173, Arg208, Lys209, Arg261, Glu281, Ala283, Gly284, Ile285, Val286, and Glu289 each contribute to the UDP-alpha-D-glucose site.

The protein belongs to the glycosyltransferase group 1 family. Glycosyltransferase 4 subfamily.

Its subcellular location is the cell inner membrane. It participates in bacterial outer membrane biogenesis; LPS core biosynthesis. Its activity is regulated as follows. Inhibited by divalent metal ions such as Mg(2+), Mn(2+), Ca(2+), Zn(2+), Co(2+), Ni(2+) and Cu(2+). Its function is as follows. Glucosyltransferase involved in the biosynthesis of the core oligosaccharide region of lipopolysaccharide (LPS). Catalyzes the addition of the first outer-core glucose from UDP-glucose to the inner-core heptose II. Cannot use other sugar donors, such as UDP-galactose, UDP-glucuronic acid, UDP-galacuronic acid, GDP-mannose, ADP-glucose and GDP-glucose. In the absence of a lipid acceptor, can slowly hydrolyze UDP-glucose. The protein is Lipopolysaccharide glucosyltransferase WaaG of Escherichia coli (strain K12).